The sequence spans 233 residues: Proteasome subunit beta type-6 (233 aa).

Positions 1–12 are cleaved as a propeptide — removed in mature form; that stretch reads MDLNLDAPHSMG. Catalysis depends on T13, which acts as the Nucleophile.

This sequence belongs to the peptidase T1B family. As to quaternary structure, component of the 20S core complex of the 26S proteasome. The 26S proteasome is composed of a core protease (CP), known as the 20S proteasome, capped at one or both ends by the 19S regulatory particle (RP/PA700). The 20S proteasome core is composed of 28 subunits that are arranged in four stacked rings, resulting in a barrel-shaped structure. The two end rings are each formed by seven alpha subunits, and the two central rings are each formed by seven beta subunits. The catalytic chamber with the active sites is on the inside of the barrel.

It localises to the cytoplasm. It is found in the nucleus. The enzyme catalyses Cleavage of peptide bonds with very broad specificity.. Its function is as follows. The proteasome is a multicatalytic proteinase complex which is characterized by its ability to cleave peptides with Arg, Phe, Tyr, Leu, and Glu adjacent to the leaving group at neutral or slightly basic pH. The proteasome has an ATP-dependent proteolytic activity. The chain is Proteasome subunit beta type-6 (PBA1) from Arabidopsis thaliana (Mouse-ear cress).